The primary structure comprises 433 residues: Probable phosphoglucosamine mutase (433 aa).

Ser91 serves as the catalytic Phosphoserine intermediate. Positions 91, 229, 231, and 233 each coordinate Mg(2+). Ser91 bears the Phosphoserine mark.

This sequence belongs to the phosphohexose mutase family. Mg(2+) is required as a cofactor. In terms of processing, activated by phosphorylation.

The catalysed reaction is alpha-D-glucosamine 1-phosphate = D-glucosamine 6-phosphate. Its function is as follows. Catalyzes the conversion of glucosamine-6-phosphate to glucosamine-1-phosphate. The sequence is that of Probable phosphoglucosamine mutase from Methanococcoides burtonii (strain DSM 6242 / NBRC 107633 / OCM 468 / ACE-M).